The primary structure comprises 377 residues: Cilia- and flagella-associated protein 263 (377 aa).

Coiled-coil stretches lie at residues 95 to 139 (LTVE…ADIR) and 169 to 355 (QKVM…LKGY).

The protein belongs to the CFAP263 family. As to quaternary structure, forms a complex with CFAP184; the interaction is required for functional activity in cilia. Interacts with HAP1 and PCM1.

The protein resides in the cytoplasm. The protein localises to the cytoskeleton. It localises to the microtubule organizing center. It is found in the centrosome. Its subcellular location is the centriolar satellite. The protein resides in the cell projection. The protein localises to the cilium. In terms of biological role, component of centriolar satellites contributing to primary cilium formation. In complex with CFAP263, acts as a regulator of ciliary beating that connects radial spoke 3 (RS3) to the inner dynein arm (IDA) and the nexin-dynein regulatory complex (N-DRC). The complex is positioned parallel to N-DRC and forms a connection between the arch at the base of RS3, the IDA tail and N-DRC. This chain is Cilia- and flagella-associated protein 263 (Cfap263), found in Mus musculus (Mouse).